Reading from the N-terminus, the 191-residue chain is Peptidyl-tRNA hydrolase (191 aa).

Tyr-17 is a tRNA binding site. The active-site Proton acceptor is His-22. TRNA contacts are provided by Tyr-68, Asn-70, and Asn-116.

It belongs to the PTH family. As to quaternary structure, monomer.

The protein resides in the cytoplasm. It carries out the reaction an N-acyl-L-alpha-aminoacyl-tRNA + H2O = an N-acyl-L-amino acid + a tRNA + H(+). In terms of biological role, hydrolyzes ribosome-free peptidyl-tRNAs (with 1 or more amino acids incorporated), which drop off the ribosome during protein synthesis, or as a result of ribosome stalling. Its function is as follows. Catalyzes the release of premature peptidyl moieties from peptidyl-tRNA molecules trapped in stalled 50S ribosomal subunits, and thus maintains levels of free tRNAs and 50S ribosomes. This chain is Peptidyl-tRNA hydrolase, found in Mycobacterium avium (strain 104).